A 218-amino-acid polypeptide reads, in one-letter code: MDKSESTSAGRNRRRRPRRGSRSASSSADANFRVLSQQLSRLNKTLAAGRPTINHPTFVGSERCRPGYTFTSITLKPPKIDRGSYYGKRLLLPDSVTEYDKKLVSRIQIRVNPLPKFDSTVWVTVRKVLASSDLSVAAISAMFADGASPVLVYQYAASGVQANNKLLYDLSAMRADIGDMRKYAILVYSKDDALETDELVLHVDIEHQRIPTSGVLPV.

Met-1 bears the N-acetylmethionine; by host mark. Low complexity predominate over residues 1-10 (MDKSESTSAG). The tract at residues 1 to 30 (MDKSESTSAGRNRRRRPRRGSRSASSSADA) is disordered. Basic residues predominate over residues 11–21 (RNRRRRPRRGS).

Belongs to the cucumovirus capsid protein family.

It is found in the virion. In terms of biological role, capsid protein. Probably binds RNA and plays a role in packaging. This chain is Capsid protein, found in Cucumber mosaic virus (strain P6) (CMV).